A 396-amino-acid chain; its full sequence is Imidazolonepropionase (396 aa).

Residues His-69 and His-71 each coordinate Fe(3+). Positions 69 and 71 each coordinate Zn(2+). Arg-78, Tyr-136, and His-163 together coordinate 4-imidazolone-5-propanoate. An N-formimidoyl-L-glutamate-binding site is contributed by Tyr-136. His-224 provides a ligand contact to Fe(3+). Position 224 (His-224) interacts with Zn(2+). Residue Gln-227 coordinates 4-imidazolone-5-propanoate. Asp-298 contributes to the Fe(3+) binding site. Asp-298 lines the Zn(2+) pocket. N-formimidoyl-L-glutamate contacts are provided by Asn-300 and Gly-302. Thr-303 is a binding site for 4-imidazolone-5-propanoate.

This sequence belongs to the metallo-dependent hydrolases superfamily. HutI family. Zn(2+) serves as cofactor. The cofactor is Fe(3+).

Its subcellular location is the cytoplasm. The catalysed reaction is 4-imidazolone-5-propanoate + H2O = N-formimidoyl-L-glutamate. It functions in the pathway amino-acid degradation; L-histidine degradation into L-glutamate; N-formimidoyl-L-glutamate from L-histidine: step 3/3. Catalyzes the hydrolytic cleavage of the carbon-nitrogen bond in imidazolone-5-propanoate to yield N-formimidoyl-L-glutamate. It is the third step in the universal histidine degradation pathway. The protein is Imidazolonepropionase of Cutibacterium acnes (strain DSM 16379 / KPA171202) (Propionibacterium acnes).